The primary structure comprises 335 residues: Probable cytosolic iron-sulfur protein assembly protein Ciao1 (335 aa).

WD repeat units lie at residues 12–51 (GHKGRIWGVAWHPKGNTFASCGEDKAIRIWSLSGNSWSTK), 57–96 (GHKRTIREIRWSPCGQYLASASFDATTAIWSKSSGEFECN), 101–140 (GHENEVKSVSWSKSGGLLATCSRDKSVWIWEVAGDDEFEC), 146–185 (PHTQDVKRVVWHPTKEILASASYDNTIKMFAESALDSDWD), 192–231 (SHTSTVWSIDFDADGERLVSCSDDTTLKIWRAYHPGNDAG), 250–289 (QHSRAIYDVSWCKLTGLIATACGDDGIRIFKESSDSKRDE), and 301–335 (AHEQDVNSVEWNPVMAGQLISCSDDGTIKIWKMLD).

It belongs to the WD repeat CIA1 family.

In terms of biological role, essential component of the cytosolic iron-sulfur (Fe/S) protein assembly machinery. Required for the maturation of extramitochondrial Fe/S proteins. The protein is Probable cytosolic iron-sulfur protein assembly protein Ciao1 of Drosophila willistoni (Fruit fly).